A 132-amino-acid chain; its full sequence is Large ribosomal subunit protein uL14 (132 aa).

It belongs to the universal ribosomal protein uL14 family. In terms of assembly, part of the 50S ribosomal subunit. Forms a cluster with proteins L3 and L24e, part of which may contact the 16S rRNA in 2 intersubunit bridges.

Functionally, binds to 23S rRNA. Forms part of two intersubunit bridges in the 70S ribosome. The polypeptide is Large ribosomal subunit protein uL14 (Thermoplasma volcanium (strain ATCC 51530 / DSM 4299 / JCM 9571 / NBRC 15438 / GSS1)).